A 637-amino-acid polypeptide reads, in one-letter code: Delta(14)-sterol reductase LBR (637 aa).

Residues 1-62 enclose the Tudor domain; sequence MPNRKYADGE…DIRLQSSFKQ (62 aa). Residues 1–205 are Nuclear-facing; sequence MPNRKYADGE…KTKELEFGGR (205 aa). Residues 57-73 show a composition bias toward low complexity; sequence QSSFKQRKSQSSSSSPS. Positions 57–151 are disordered; the sequence is QSSFKQRKSQ…SKLLEQQKLK (95 aa). The segment covering 74–97 has biased composition (basic residues); that stretch reads RRSRSRSRSRSPGRPAKGRRRSSS. Serine 95 and serine 96 each carry phosphoserine; by PKA. 2 stretches are compositionally biased toward basic and acidic residues: residues 98 to 110 and 124 to 151; these read HSREHKEDKKKII and NTRRYNGEPDSTERNDTSSKLLEQQKLK. The next 8 membrane-spanning stretches (helical) occupy residues 206–226, 250–270, 288–309, 317–338, 378–399, 403–425, 466–486, and 554–574; these read FGTFMLMFFLPATVLYLVLMC, VFGVFLLWFFFQALFYLLPIG, INGFYAFLLTAAAIGTLLYFQF, HFVQFAVSAAAFSMALSIYLYI, YFCELRPGLIGWVVINLAMLLA, IHNQSMPSLSMILVNSFQLLYVV, FYLVGHPIAISWPVAAAITIL, and PCGFNHILPYFYVIYFICLLV.

This sequence belongs to the ERG4/ERG24 family. As to quaternary structure, interacts with DNA. Interaction with DNA is sequence independent with higher affinity for supercoiled and relaxed circular DNA than linear DNA.

It is found in the nucleus inner membrane. The protein localises to the nucleus. It localises to the cytoplasm. The protein resides in the endoplasmic reticulum membrane. The catalysed reaction is 5alpha-cholest-8,14-dien-3beta-ol + NADPH + H(+) = 5alpha-cholest-8-en-3beta-ol + NADP(+). It carries out the reaction 4,4-dimethyl-5alpha-cholesta-8,24-dien-3beta-ol + NADP(+) = 4,4-dimethyl-5alpha-cholesta-8,14,24-trien-3beta-ol + NADPH + H(+). It catalyses the reaction 4,4-dimethyl-8,14-cholestadien-3beta-ol + NADPH + H(+) = 4,4-dimethyl-5alpha-cholest-8-en-3beta-ol + NADP(+). The protein operates within steroid biosynthesis; cholesterol biosynthesis. In terms of biological role, catalyzes the reduction of the C14-unsaturated bond of lanosterol, as part of the metabolic pathway leading to cholesterol biosynthesis. Anchors the lamina and the heterochromatin to the inner nuclear membrane. In Gallus gallus (Chicken), this protein is Delta(14)-sterol reductase LBR (LBR).